Consider the following 345-residue polypeptide: AP2-like ethylene-responsive transcription factor At1g16060 (345 aa).

The disordered stretch occupies residues 15 to 62; the sequence is TRQSKKTSVENETGDDQSATSVVLKAKRKRRSQPRDAPPQRSSVHRGV. 2 consecutive DNA-binding regions (AP2/ERF) follow at residues 58-124 and 160-218; these read VHRG…LNFP and KYRG…TNFD. Positions 243–302 are disordered; sequence HSDLSPFIKPNHESDLSQSQSSSEDNDDRKTKLLKSSPLVAEEVIGPSTPPEIAPPRRSF.

This sequence belongs to the AP2/ERF transcription factor family. AP2 subfamily.

Its subcellular location is the nucleus. Probably acts as a transcriptional activator. Binds to the GCC-box pathogenesis-related promoter element. May be involved in the regulation of gene expression by stress factors and by components of stress signal transduction pathways. In Arabidopsis thaliana (Mouse-ear cress), this protein is AP2-like ethylene-responsive transcription factor At1g16060.